The sequence spans 439 residues: 5-hydroxybenzimidazole synthase (439 aa).

Substrate contacts are provided by residues Met-96, Tyr-125, His-164, 187–189 (SKG), 228–231 (NGIR), and Glu-267. Residue His-271 coordinates Zn(2+). Tyr-294 is a substrate binding site. Residue His-335 participates in Zn(2+) binding. 3 residues coordinate [4Fe-4S] cluster: Cys-410, Cys-413, and Cys-417.

It belongs to the ThiC family. 5-hydroxybenzimidazole synthase subfamily. As to quaternary structure, homodimer. Requires [4Fe-4S] cluster as cofactor.

The enzyme catalyses 5-amino-1-(5-phospho-beta-D-ribosyl)imidazole + AH2 + S-adenosyl-L-methionine = 5-hydroxybenzimidazole + 5'-deoxyadenosine + formate + L-methionine + A + NH4(+) + phosphate + 2 H(+). Catalyzes the conversion of aminoimidazole ribotide (AIR) to 5-hydroxybenzimidazole (5-HBI) in a radical S-adenosyl-L-methionine (SAM)-dependent reaction. Is thus involved in the anaerobic biosynthesis of the benzimidazole lower axial ligand of the cobamide produced by D.autotrophicum. The polypeptide is 5-hydroxybenzimidazole synthase (Desulforapulum autotrophicum (strain ATCC 43914 / DSM 3382 / VKM B-1955 / HRM2) (Desulfobacterium autotrophicum)).